Here is a 141-residue protein sequence, read N- to C-terminus: Aspartate 1-decarboxylase 1 (141 aa).

Ser-25 serves as the catalytic Schiff-base intermediate with substrate; via pyruvic acid. Ser-25 is modified (pyruvic acid (Ser)). Substrate is bound at residue Thr-57. The active-site Proton donor is Tyr-58. A substrate-binding site is contributed by 73 to 75; sequence GPA.

Belongs to the PanD family. As to quaternary structure, heterooctamer of four alpha and four beta subunits. Requires pyruvate as cofactor. In terms of processing, is synthesized initially as an inactive proenzyme, which is activated by self-cleavage at a specific serine bond to produce a beta-subunit with a hydroxyl group at its C-terminus and an alpha-subunit with a pyruvoyl group at its N-terminus.

The protein localises to the cytoplasm. It catalyses the reaction L-aspartate + H(+) = beta-alanine + CO2. It functions in the pathway cofactor biosynthesis; (R)-pantothenate biosynthesis; beta-alanine from L-aspartate: step 1/1. Catalyzes the pyruvoyl-dependent decarboxylation of aspartate to produce beta-alanine. The protein is Aspartate 1-decarboxylase 1 of Paenarthrobacter aurescens (strain TC1).